Consider the following 357-residue polypeptide: MSLTRLLIKDFRNIENADLALSPGFNFLVGANGSGKTSVLEAIYTLGHGRAFRSLQPGRVIRHEQEAFVLHGRLQGEERETSIGLTKDKQGDSKVRIDGTDGHKIAELAHLMPMQLITPEGFTLLNGGPKYRRAFLDWGCFHNEAGFFTAWSNLKRLLKQRNAALRQVSRYEQLRPWDKELIPLAEQISTWRAEYSIAIAQDMADTCQQFLPEFSLTFSFQRGWEKETDYADVLERSFERDRMLTYTAHGPHKADFRIRADGAPVEDTLSRGQLKLLMCALRLAQGEFLTRESGRRCLYLIDDFASELDDARRGLLASRLKATQSQVFVSVISAEHVIDMSDENSKMFTVEKGKITD.

ATP is bound at residue 30–37; that stretch reads GANGSGKT.

It belongs to the RecF family.

The protein localises to the cytoplasm. The RecF protein is involved in DNA metabolism; it is required for DNA replication and normal SOS inducibility. RecF binds preferentially to single-stranded, linear DNA. It also seems to bind ATP. This is DNA replication and repair protein RecF from Salmonella schwarzengrund (strain CVM19633).